The primary structure comprises 106 residues: Toxin-like structure LSTX-D7 (106 aa).

An N-terminal signal peptide occupies residues 1–20 (MMKVLVVFALLVTLISYSSS). Positions 21-41 (EGIDDLEADELLSLMANEQTR) are excised as a propeptide. 4 cysteine pairs are disulfide-bonded: Cys45-Cys60, Cys52-Cys69, Cys59-Cys85, and Cys71-Cys83.

It belongs to the neurotoxin 19 (CSTX) family. 02 (D7) subfamily. Expressed by the venom gland.

Its subcellular location is the secreted. The sequence is that of Toxin-like structure LSTX-D7 from Lycosa singoriensis (Wolf spider).